The primary structure comprises 287 residues: MKLAVYGKGGIGKSTSSCNISIALATRGKKVLQIGADPKHDSTFALTGFLIPTIMDTLQSKDYHYEEIWPEDIIYQGYGGVDCVEAGGPPAGAGCGGFVVGETTKLLKELNSFYEYDVILFDVLGDVVCGGFPAPLNYADYCLIVTDNGFDALFAANRIAASVREKARTHPLRLAGLVGNRTSKRDLIDKYVESCPMPVLEVLPLIEEIRVSRVKGKTLFEMTETDSSLNYVCQYYLNIADQLLAEPEGVVPKEVADRELFSLLSDFYHREASFTPQEGVVDSFLLV.

ATP-binding positions include 10-15 (GIGKST) and Lys39. Ser14 lines the Mg(2+) pocket. The [4Fe-4S] cluster site is built by Cys95 and Cys129. Residue 180-181 (NR) participates in ATP binding.

It belongs to the NifH/BchL/ChlL family. Homodimer. Protochlorophyllide reductase is composed of three subunits; ChlL, ChlN and ChlB. [4Fe-4S] cluster serves as cofactor.

Its subcellular location is the plastid. It is found in the chloroplast. The catalysed reaction is chlorophyllide a + oxidized 2[4Fe-4S]-[ferredoxin] + 2 ADP + 2 phosphate = protochlorophyllide a + reduced 2[4Fe-4S]-[ferredoxin] + 2 ATP + 2 H2O. It functions in the pathway porphyrin-containing compound metabolism; chlorophyll biosynthesis (light-independent). Functionally, component of the dark-operative protochlorophyllide reductase (DPOR) that uses Mg-ATP and reduced ferredoxin to reduce ring D of protochlorophyllide (Pchlide) to form chlorophyllide a (Chlide). This reaction is light-independent. The L component serves as a unique electron donor to the NB-component of the complex, and binds Mg-ATP. The protein is Light-independent protochlorophyllide reductase iron-sulfur ATP-binding protein of Nephroselmis olivacea (Green alga).